A 179-amino-acid polypeptide reads, in one-letter code: Large ribosomal subunit protein uL5 (179 aa).

The protein belongs to the universal ribosomal protein uL5 family. Part of the 50S ribosomal subunit; part of the 5S rRNA/L5/L18/L25 subcomplex. Contacts the 5S rRNA and the P site tRNA. Forms a bridge to the 30S subunit in the 70S ribosome.

In terms of biological role, this is one of the proteins that bind and probably mediate the attachment of the 5S RNA into the large ribosomal subunit, where it forms part of the central protuberance. In the 70S ribosome it contacts protein S13 of the 30S subunit (bridge B1b), connecting the 2 subunits; this bridge is implicated in subunit movement. Contacts the P site tRNA; the 5S rRNA and some of its associated proteins might help stabilize positioning of ribosome-bound tRNAs. The protein is Large ribosomal subunit protein uL5 of Nitratidesulfovibrio vulgaris (strain ATCC 29579 / DSM 644 / CCUG 34227 / NCIMB 8303 / VKM B-1760 / Hildenborough) (Desulfovibrio vulgaris).